The sequence spans 346 residues: Parapinopsin (346 aa).

Residues 1 to 29 (MASIILINFSETDTLHLGSVNDHIMPRIG) lie on the Extracellular side of the membrane. The N-linked (GlcNAc...) asparagine glycan is linked to asparagine 8. Residues 30-54 (YTILSIIMALSSTFGIILNMVVIIV) traverse the membrane as a helical segment. Residues 55 to 66 (TVRYKQLRQPLN) lie on the Cytoplasmic side of the membrane. The helical transmembrane segment at 67–91 (YALVNLAVADLGCPVFGGLLTAVTN) threads the bilayer. Topologically, residues 92-106 (AMGYFSLGRVGCVLE) are extracellular. A disulfide bond links cysteine 103 and cysteine 180. A helical transmembrane segment spans residues 107–126 (GFAVAFFGIAGLCSVAVIAV). The Cytoplasmic portion of the chain corresponds to 127–145 (DRYMVVCRPLGAVMFQTKH). A helical transmembrane segment spans residues 146 to 169 (ALAGVVFSWVWSFIWNTPPLFGWG). At 170-193 (SYQLEGVMTSCAPNWYRRDPVNVS) the chain is on the extracellular side. Residue asparagine 191 is glycosylated (N-linked (GlcNAc...) asparagine). A helical transmembrane segment spans residues 194–221 (YILCYFMLCFALPFATIIFSYMHLLHTL). Over 222 to 244 (WQVAKLQVADSGSTAKVEVQVAR) the chain is Cytoplasmic. A helical membrane pass occupies residues 245 to 268 (MVVIMVMAFLLTWLPYAAFALTVI). Residues 269–276 (IDSNIYIN) lie on the Extracellular side of the membrane. The helical transmembrane segment at 277 to 301 (PVIGTIPAYLAKSSTVFNPIIYIFM) threads the bilayer. Lysine 288 bears the N6-(retinylidene)lysine mark. Topologically, residues 302–346 (NRQFRDYALPCLLCGKNPWAAKEGRDSDTNTLTTTVSKNTSVSPL) are cytoplasmic. Residue cysteine 315 is the site of S-palmitoyl cysteine attachment. The tract at residues 325 to 346 (GRDSDTNTLTTTVSKNTSVSPL) is disordered. A compositionally biased stretch (low complexity) spans 330-346 (TNTLTTTVSKNTSVSPL).

Belongs to the G-protein coupled receptor 1 family. Opsin subfamily. Phosphorylated on some or all of the serine and threonine residues present in the C-terminal region. Parapineal organ.

Its subcellular location is the membrane. The protein is Parapinopsin of Ictalurus punctatus (Channel catfish).